Here is a 79-residue protein sequence, read N- to C-terminus: Small proline-rich protein 4 (79 aa).

Residues methionine 1–proline 26 show a composition bias toward low complexity. The tract at residues methionine 1 to lysine 79 is disordered. The span at lysine 66–lysine 79 shows a compositional bias: polar residues.

Belongs to the cornifin (SPRR) family. In terms of processing, cross-linked to membrane proteins by transglutaminase.

The protein localises to the cytoplasm. It localises to the cell cortex. Its function is as follows. Cross-linked envelope protein of keratinocytes. Involved in UV-induced cornification. The protein is Small proline-rich protein 4 (SPRR4) of Homo sapiens (Human).